The primary structure comprises 688 residues: DNA ligase (688 aa).

NAD(+) is bound by residues 38–42 (DEEYD), 87–88 (SL), and Glu118. Lys120 acts as the N6-AMP-lysine intermediate in catalysis. 4 residues coordinate NAD(+): Arg141, Glu175, Lys291, and Lys315. 4 residues coordinate Zn(2+): Cys409, Cys412, Cys428, and Cys433. In terms of domain architecture, BRCT spans 590-679 (VKLDILRGLT…AELKGYNFDE (90 aa)).

This sequence belongs to the NAD-dependent DNA ligase family. LigA subfamily. The cofactor is Mg(2+). Requires Mn(2+) as cofactor.

It carries out the reaction NAD(+) + (deoxyribonucleotide)n-3'-hydroxyl + 5'-phospho-(deoxyribonucleotide)m = (deoxyribonucleotide)n+m + AMP + beta-nicotinamide D-nucleotide.. In terms of biological role, DNA ligase that catalyzes the formation of phosphodiester linkages between 5'-phosphoryl and 3'-hydroxyl groups in double-stranded DNA using NAD as a coenzyme and as the energy source for the reaction. It is essential for DNA replication and repair of damaged DNA. In Thermotoga maritima (strain ATCC 43589 / DSM 3109 / JCM 10099 / NBRC 100826 / MSB8), this protein is DNA ligase.